A 134-amino-acid polypeptide reads, in one-letter code: Arsenate reductase (134 aa).

Residues Cys-11, Cys-83, and Cys-90 each act as nucleophile in the active site. Cystine bridges form between Cys-11–Cys-83 and Cys-83–Cys-90.

This sequence belongs to the low molecular weight phosphotyrosine protein phosphatase family. Thioredoxin-coupled ArsC subfamily.

Its subcellular location is the cytoplasm. It carries out the reaction arsenate + [thioredoxin]-dithiol + H(+) = arsenite + [thioredoxin]-disulfide + H2O. Functionally, catalyzes the reduction of arsenate [As(V)] to arsenite [As(III)]. This is Arsenate reductase from Bacillus cereus (strain AH187).